Reading from the N-terminus, the 785-residue chain is AP-1 complex subunit gamma-like 2 (785 aa).

Positions 369–379 (LSLALVNSSNV) are essential for ubiquitin-binding. The segment at 592 to 617 (GPQADEEAKESKEAAQLSEAAPVPTE) is disordered. Positions 665–780 (APIPDLKVFE…QEIFEVNNLP (116 aa)) constitute a GAE domain.

This sequence belongs to the adaptor complexes large subunit family. In terms of assembly, may interact with AP1S1/Sigma1A-adaptin and AP1S2/Sigma1B-adaptin. Probably does not interact with APB1. Interacts (via GAE domain) with RABEP1, NECAP1, CLINT1 and AFTPH/aftiphilin. As to quaternary structure, (Microbial infection) Interacts with HBV major surface antigen L. Interacts with HBV core protein C in a ubiquitin-dependent manner. As to expression, expressed in all but one (skeletal muscle) tissues examined.

The protein localises to the golgi apparatus membrane. The protein resides in the cytoplasmic vesicle membrane. It is found in the endosome membrane. May function in protein sorting in late endosomes or multivesucular bodies (MVBs). In terms of biological role, (Microbial infection) Involved in MVB-assisted maturation of hepatitis B virus (HBV). The polypeptide is AP-1 complex subunit gamma-like 2 (AP1G2) (Homo sapiens (Human)).